The chain runs to 253 residues: ER membrane protein complex subunit 3 (253 aa).

A run of 3 helical transmembrane segments spans residues 10 to 30 (WVLLPISIVMVLTGVLKQYIM), 126 to 146 (FIPQTIIMWWVNHFFAGFILM), and 176 to 196 (SISWYFISVLGLNPVYNLIGL).

Belongs to the EMC3 family. As to quaternary structure, component of the ER membrane protein complex (EMC), which is composed of EMC1, EMC2, EMC3, EMC4, EMC5 and EMC6.

It localises to the endoplasmic reticulum membrane. In terms of biological role, the EMC seems to be required for efficient folding of proteins in the endoplasmic reticulum (ER). The polypeptide is ER membrane protein complex subunit 3 (AIM27) (Saccharomyces cerevisiae (strain RM11-1a) (Baker's yeast)).